We begin with the raw amino-acid sequence, 2760 residues long: A-kinase anchor protein 13 (2760 aa).

Disordered stretches follow at residues 356–388 (CSHK…QDSC), 442–517 (PDAR…EPKQ), 530–577 (AAGA…VLPA), 604–711 (SSLD…AAHN), 729–857 (EKDL…EQEG), 890–940 (GGSI…QEIS), 954–1029 (EKAL…ASEA), and 1132–1162 (EGTD…DLPT). Over residues 378 to 388 (DSRSASHQDSC) the composition is skewed to polar residues. The span at 442-454 (PDARQHSSGRELP) shows a compositional bias: basic and acidic residues. Positions 482–504 (QNSKPQVGESAKERLENSDISSA) are important for interaction with PRKAR2A. A compositionally biased stretch (low complexity) spans 530 to 547 (AAGADAPAEASPAWSPEE). 3 stretches are compositionally biased toward polar residues: residues 620–638 (KQNS…SQAP), 654–664 (CPQSTETSSGG), and 701–711 (DTVTSDTAAHN). The span at 769–780 (SSFSLASSPESE) shows a compositional bias: low complexity. Ser-776 carries the post-translational modification Phosphoserine. Thr-801 carries the post-translational modification Phosphothreonine. Over residues 814–826 (PDGRDLNDTDKVG) the composition is skewed to basic and acidic residues. Positions 839–849 (ELQTSMGNTSP) are enriched in polar residues. Residues 906–931 (GKDKATKCPSVKEDVHSSEMSREDQR) show a composition bias toward basic and acidic residues. The residue at position 932 (Thr-932) is a Phosphothreonine. 2 stretches are compositionally biased toward polar residues: residues 958–972 (QHSN…CLQT) and 1001–1020 (TSLS…SGSS). Ser-962 is subject to Phosphoserine. Residues 1213–1228 (SIEETATRIVEAVIKQ) are important for interaction with PRKAR2A. 3 disordered regions span residues 1392–1411 (GVLQ…PSDE), 1425–1508 (LLCD…VPAN), and 1520–1539 (SPFR…DAEM). Over residues 1428–1439 (DTTGSSSSTDDT) the composition is skewed to low complexity. Positions 1449–1472 (GSDVSLPQTSKLNRSRNHQSSNGF) are enriched in polar residues. A phosphoserine mark is found at Ser-1450, Ser-1468, Ser-1501, Ser-1526, and Ser-1585. The important for interaction with MAP2K3 stretch occupies residues 1546 to 1695 (QVLGHVVRRP…SRPFHSASAN (150 aa)). The segment at 1592-1628 (GGGVGNKPSSSLEISSANSSELRNPFSGEEQRSSLMS) is disordered. Low complexity predominate over residues 1600-1611 (SSSLEISSANSS). Ser-1625, Ser-1628, and Ser-1630 each carry phosphoserine. An N6-methyllysine modification is found at Lys-1654. The tract at residues 1733–1755 (RNKMSSSKKSKKEKDKKTLNGHT) is disordered. The Phorbol-ester/DAG-type zinc finger occupies 1753-1800 (GHTFSPIPIVGPINCSQCMKPFTNKDAYTCASCGAFVHKGCRENLASC). Ser-1838, Ser-1857, and Ser-1891 each carry phosphoserine. The interval 1881 to 2760 (MSNTWKFLSH…VPAEGEEIFC (880 aa)) is interaction with ESR1. Thr-1892 is modified (phosphothreonine). A phosphoserine mark is found at Ser-1894 and Ser-1907. A DH domain is found at 1956-2153 (KRQEVIYELM…KDVIGAVDSK (198 aa)). In terms of domain architecture, PH spans 2176 to 2280 (MRMKSGQMFA…WIQIIQDTIN (105 aa)). Phosphoserine occurs at positions 2292 and 2345. The stretch at 2292–2329 (SENEEEKRLLDTKARELKEQLQQKDQQILLLLEEKEMI) forms a coiled coil. Residue Thr-2415 is modified to Phosphothreonine. Residues 2422–2450 (HQLNASKGGEKEEGDDGQDLRRTESDSGL) form a disordered region. Positions 2439 to 2450 (QDLRRTESDSGL) are enriched in basic and acidic residues. 2 positions are modified to phosphoserine: Ser-2511 and Ser-2514. The stretch at 2516–2632 (LIEQEKQRSL…LSQRQMEQDL (117 aa)) forms a coiled coil. 2 disordered regions span residues 2568–2588 (AERE…REEL) and 2660–2760 (TPSI…EIFC). 2 stretches are compositionally biased toward polar residues: residues 2660-2684 (TPSI…SISR) and 2696-2711 (SSAS…SQAP). At Ser-2676 the chain carries Phosphoserine. The span at 2743–2752 (PGDGPAPEVP) shows a compositional bias: low complexity.

Interacts with the cAMP-dependent protein kinase (PKA) holoenzyme and with the regulatory subunit PRKAR2A. Interacts with RHOA. Also interacts with RHOB and RHOC. Identified in a ternary complex with RHOA and PRKAR2A. Identified in a complex with NR3C1 and RHOA. Interacts with BRAF and KSR1. Identified in a complex with BRAF and KSR1. Component of a signaling complex containing at least AKAP13, PKN1, MAPK14, ZAK and MAP2K3. Within this complex, AKAP13 interacts directly with PKN1, which in turn recruits MAPK14, MAP2K3 and ZAK. Interacts (phosphorylated form) with YWHAB and YWHAZ. Interaction with YWHAB inhibits activation of RHOA, interferes with PKN1 binding and activation of MAP kinases. Interacts with GNA12. Interacts with IKBKB. Interacts with ESR1, THRA, PPARA and NME2. Interacts (via the C-terminal domain after the PH domain) with MEF2C and RXRB. Interacts (via the C-terminal domain after the PH domain) with PRKD1. In terms of tissue distribution, detected in bone osteoblasts (at protein level).

The protein localises to the cytoplasm. The protein resides in the cytosol. It localises to the cell cortex. It is found in the nucleus. Its subcellular location is the membrane. Scaffold protein that plays an important role in assembling signaling complexes downstream of several types of G protein-coupled receptors. Activates RHOA in response to signaling via G protein-coupled receptors via its function as Rho guanine nucleotide exchange factor. May also activate other Rho family members. Part of a kinase signaling complex that links ADRA1A and ADRA1B adrenergic receptor signaling to the activation of downstream p38 MAP kinases, such as MAPK11 and MAPK14. Part of a signaling complex that links ADRA1B signaling to the activation of RHOA and IKBKB/IKKB, leading to increased NF-kappa-B transcriptional activity. Part of a RHOA-dependent signaling cascade that mediates responses to lysophosphatidic acid (LPA), a signaling molecule that activates G-protein coupled receptors and potentiates transcriptional activation of the glucocorticoid receptor NR3C1. Part of a signaling cascade that stimulates MEF2C-dependent gene expression in response to lysophosphatidic acid (LPA). Part of a signaling pathway that activates MAPK11 and/or MAPK14 and leads to increased transcription activation of the estrogen receptors ESR1 and ESR2. Part of a signaling cascade that links cAMP and EGFR signaling to BRAF signaling and to PKA-mediated phosphorylation of KSR1, leading to the activation of downstream MAP kinases, such as MAPK1 or MAPK3. Functions as a scaffold protein that anchors cAMP-dependent protein kinase (PKA) and PRKD1. This promotes activation of PRKD1, leading to increased phosphorylation of HDAC5 and ultimately cardiomyocyte hypertrophy. Has no guanine nucleotide exchange activity on CDC42, Ras or Rac. Required for normal embryonic heart development, and in particular for normal sarcomere formation in the developing cardiomyocytes. Plays a role in cardiomyocyte growth and cardiac hypertrophy in response to activation of the beta-adrenergic receptor by phenylephrine or isoproterenol. Required for normal adaptive cardiac hypertrophy in response to pressure overload. Plays a role in osteogenesis. This Rattus norvegicus (Rat) protein is A-kinase anchor protein 13.